A 148-amino-acid chain; its full sequence is Leghemoglobin-1 (148 aa).

Positions 2-146 constitute a Globin domain; that stretch reads GFTDKQEALV…LATAIKKAMK (145 aa). 2 positions are modified to nitrated tyrosine: Tyr24 and Tyr29. Ser44 provides a ligand contact to heme b. A Phosphoserine modification is found at Ser44. O2 is bound at residue His61. The heme b site is built by His93 and Lys96. Tyr134 bears the Nitrated tyrosine mark.

This sequence belongs to the plant globin family. As to quaternary structure, monomer. Post-translationally, nitrated in effective nodules and particularly in hypoxic conditions; this mechanism may play a protective role in the symbiosis by buffering toxic peroxynitrite NO(2)(-). Nitration level decrease during nodule senescence. In terms of processing, phosphorylation at Ser-44 disrupts the molecular environment of its porphyrin ring oxygen binding pocket, thus leading to a reduced oxygen consumption and to the delivery of oxygen O(2) to symbiosomes. Root nodules.

It localises to the cytoplasm. The protein resides in the cytosol. It is found in the nucleus. In terms of biological role, leghemoglobin that reversibly binds oxygen O(2) through a pentacoordinated heme iron. In root nodules, facilitates the diffusion of oxygen to the bacteroids while preventing the bacterial nitrogenase from being inactivated by buffering dioxygen, nitric oxide and carbon monoxide, and promoting the formation of reactive oxygen species (ROS, e.g. H(2)O(2)). This role is essential for symbiotic nitrogen fixation (SNF). This is Leghemoglobin-1 from Pisum sativum (Garden pea).